The chain runs to 394 residues: Ribulose bisphosphate carboxylase large chain (394 aa).

Lys5 bears the N6,N6,N6-trimethyllysine mark. 2 residues coordinate substrate: Asn114 and Thr164. Residue Lys166 is the Proton acceptor of the active site. Lys168 is a substrate binding site. 3 residues coordinate Mg(2+): Lys192, Asp194, and Glu195. Residue Lys192 is modified to N6-carboxylysine. His285 (proton acceptor) is an active-site residue. Positions 286, 318, and 370 each coordinate substrate.

Belongs to the RuBisCO large chain family. Type I subfamily. In terms of assembly, heterohexadecamer of 8 large chains and 8 small chains. The cofactor is Mg(2+).

The protein resides in the plastid. The protein localises to the chloroplast. The catalysed reaction is 2 (2R)-3-phosphoglycerate + 2 H(+) = D-ribulose 1,5-bisphosphate + CO2 + H2O. It carries out the reaction D-ribulose 1,5-bisphosphate + O2 = 2-phosphoglycolate + (2R)-3-phosphoglycerate + 2 H(+). RuBisCO catalyzes two reactions: the carboxylation of D-ribulose 1,5-bisphosphate, the primary event in carbon dioxide fixation, as well as the oxidative fragmentation of the pentose substrate in the photorespiration process. Both reactions occur simultaneously and in competition at the same active site. The protein is Ribulose bisphosphate carboxylase large chain (rbcL) of Cabomba caroliniana (Carolina fanwort).